The sequence spans 182 residues: Ribosome maturation factor RimM (182 aa).

The region spanning 99 to 176 is the PRC barrel domain; it reads DDEYYHADLI…ELPAEIEGDT (78 aa).

Belongs to the RimM family. Binds ribosomal protein uS19.

It localises to the cytoplasm. In terms of biological role, an accessory protein needed during the final step in the assembly of 30S ribosomal subunit, possibly for assembly of the head region. Essential for efficient processing of 16S rRNA. May be needed both before and after RbfA during the maturation of 16S rRNA. It has affinity for free ribosomal 30S subunits but not for 70S ribosomes. The sequence is that of Ribosome maturation factor RimM from Rhodopseudomonas palustris (strain HaA2).